The chain runs to 327 residues: Malate dehydrogenase (327 aa).

Position 12-18 (Gly-12–Gly-18) interacts with NAD(+). Substrate is bound by residues Arg-93 and Arg-99. Residues Asn-106, Gln-113, and Val-130–Asn-132 each bind NAD(+). Positions 132 and 163 each coordinate substrate. His-188 acts as the Proton acceptor in catalysis.

Belongs to the LDH/MDH superfamily. MDH type 2 family.

It catalyses the reaction (S)-malate + NAD(+) = oxaloacetate + NADH + H(+). In terms of biological role, catalyzes the reversible oxidation of malate to oxaloacetate. The protein is Malate dehydrogenase of Cupriavidus necator (strain ATCC 17699 / DSM 428 / KCTC 22496 / NCIMB 10442 / H16 / Stanier 337) (Ralstonia eutropha).